Reading from the N-terminus, the 251-residue chain is Hydroxyacylglutathione hydrolase (251 aa).

Residues H53, H55, D57, H58, H110, D127, and H165 each coordinate Zn(2+).

It belongs to the metallo-beta-lactamase superfamily. Glyoxalase II family. As to quaternary structure, monomer. Zn(2+) is required as a cofactor.

The enzyme catalyses an S-(2-hydroxyacyl)glutathione + H2O = a 2-hydroxy carboxylate + glutathione + H(+). It participates in secondary metabolite metabolism; methylglyoxal degradation; (R)-lactate from methylglyoxal: step 2/2. Its function is as follows. Thiolesterase that catalyzes the hydrolysis of S-D-lactoyl-glutathione to form glutathione and D-lactic acid. In Serratia proteamaculans (strain 568), this protein is Hydroxyacylglutathione hydrolase.